Consider the following 413-residue polypeptide: Multifunctional CCA protein (413 aa).

2 residues coordinate ATP: G8 and R11. The CTP site is built by G8 and R11. Mg(2+) is bound by residues D21 and D23. ATP contacts are provided by R91, R143, and R146. R91, R143, and R146 together coordinate CTP. The HD domain maps to 232 to 333; it reads TGVHVMMVVD…VRLFERSDAL (102 aa).

This sequence belongs to the tRNA nucleotidyltransferase/poly(A) polymerase family. Bacterial CCA-adding enzyme type 1 subfamily. In terms of assembly, monomer. Can also form homodimers and oligomers. Requires Mg(2+) as cofactor. It depends on Ni(2+) as a cofactor.

The catalysed reaction is a tRNA precursor + 2 CTP + ATP = a tRNA with a 3' CCA end + 3 diphosphate. It catalyses the reaction a tRNA with a 3' CCA end + 2 CTP + ATP = a tRNA with a 3' CCACCA end + 3 diphosphate. Its function is as follows. Catalyzes the addition and repair of the essential 3'-terminal CCA sequence in tRNAs without using a nucleic acid template. Adds these three nucleotides in the order of C, C, and A to the tRNA nucleotide-73, using CTP and ATP as substrates and producing inorganic pyrophosphate. tRNA 3'-terminal CCA addition is required both for tRNA processing and repair. Also involved in tRNA surveillance by mediating tandem CCA addition to generate a CCACCA at the 3' terminus of unstable tRNAs. While stable tRNAs receive only 3'-terminal CCA, unstable tRNAs are marked with CCACCA and rapidly degraded. The sequence is that of Multifunctional CCA protein from Burkholderia vietnamiensis (strain G4 / LMG 22486) (Burkholderia cepacia (strain R1808)).